Here is a 157-residue protein sequence, read N- to C-terminus: Type II restriction enzyme PvuII (157 aa).

Mg(2+)-binding residues include D58 and E68.

In terms of assembly, homodimer. It depends on Mg(2+) as a cofactor.

The catalysed reaction is Endonucleolytic cleavage of DNA to give specific double-stranded fragments with terminal 5'-phosphates.. Its function is as follows. A P subtype restriction enzyme that recognizes the double-stranded sequence 5'-CAGCTG-3' and cleaves after G-3. The polypeptide is Type II restriction enzyme PvuII (pvuIIR) (Proteus hauseri).